The sequence spans 141 residues: Hemoglobin subunit alpha-D (141 aa).

In terms of domain architecture, Globin spans 1 to 141; the sequence is MLTAEDKKLI…VAAVLAGKYR (141 aa). Heme b contacts are provided by His58 and His87.

This sequence belongs to the globin family. In terms of assembly, heterotetramer of two alpha-D chains and two beta chains. Red blood cells.

Functionally, involved in oxygen transport from the lung to the various peripheral tissues. This is Hemoglobin subunit alpha-D (HBAD) from Coturnix japonica (Japanese quail).